Consider the following 770-residue polypeptide: Formate acetyltransferase (770 aa).

The region spanning 5-635 (NEMQKLAWAG…KTGNTPDGRR (631 aa)) is the PFL domain. The active-site S-acetylcysteine intermediate is Cys419. Residue Cys420 is the Cysteine radical intermediate of the active site. The Glycine radical domain maps to 642–770 (PGANPMHGRD…VITRTFTESM (129 aa)). Glycine radical is present on Gly745.

Belongs to the glycyl radical enzyme (GRE) family. PFL subfamily. As to quaternary structure, homodimer.

It localises to the cytoplasm. The catalysed reaction is formate + acetyl-CoA = pyruvate + CoA. Its pathway is fermentation; pyruvate fermentation; formate from pyruvate: step 1/1. Functionally, catalyzes the conversion of pyruvate to formate and acetyl-CoA. The polypeptide is Formate acetyltransferase (pflB) (Haemophilus influenzae (strain ATCC 51907 / DSM 11121 / KW20 / Rd)).